Reading from the N-terminus, the 736-residue chain is MSQHELDIASSPGDVRPWIRYISSVKNDKTTARQKCILFERAVTALPRSYKLWKEYLDFRSGLCTGLNPIKHADEYDRVNALYEKSLVLLHKMPVIWLQYLQFLMLQPKVTKTRSVINEALRSLPVQQHPRVLKLALQFGTKVGGPTSVQIWKRYVLAYPDQKETMAQSLIKMGYHGEAAVVLIELLNASGDNYALWTELVDLIGESDKLTLEPPVEQIISSGIKRFPDQRGPLTVQLANFLVRNGDLESARDVFEDGITTANTVRDFTVVFDAYAEFEERIVTHLIENESPMADLRIAKLDHLLERRPFLISDVRLRREPYSVLEWQKRIALYEDPAETVAAYTEAVQSIPPAKADGKLSQLWISWAKFYAEDRETACEIYHKATLVPYKSVSELADVYLAWSQYESENDHWENAVKIIKQALESPNTHVSYHNSDLTAQDRIHKSVRLWSYYADLVESYGTFEETKQVYEKIMALDLLTPLFVVNYATLLEENDHFEEMFKVYEKGISLFEESAFEIWNLYLVKASPRLGLERLRDLFEDAISKFPTQKALYILYGKLEEDRGLVRNAMRVYSAMCDHVKTSETFKYYIGRTVENFGLAATRPVYDKALESLPNKDASELALDYAQMEEKLGEIDRARAIYGYGSQFSDPQIIKYYDAWHKFEVAHGTEDTFKDMLRIKRSIQAQFNTDIHYATTAAEVKKGTVQEFVKGETVQKGNIEPPVAQANEDEIELDI.

HAT repeat units follow at residues 1-27 (MSQH…SVKN), 30-62 (TTAR…FRSG), 74-106 (DEYD…FLML), 130-161 (PRVL…AYPD), 246-281 (GDLE…FEER), 339-373 (ETVA…FYAE), 377-409 (TACE…YESE), 428-460 (NTHV…LVES), 462-494 (GTFE…LLEE), 496-529 (DHFE…KASP), 531-563 (LGLE…LEED), 598-632 (FGLA…MEEK), and 634-667 (GEID…FEVA).

Belongs to the crooked-neck family. As to quaternary structure, associated with the spliceosome.

The protein localises to the nucleus. In terms of biological role, involved in pre-mRNA splicing and cell cycle progression. The chain is Pre-mRNA-splicing factor SYF1 (SYF1) from Yarrowia lipolytica (strain CLIB 122 / E 150) (Yeast).